Consider the following 200-residue polypeptide: CASP-like protein 1D2 (200 aa).

Residues 1–26 (MASTENPDPETGKSEPIPASATTPPP) form a disordered region. At 1 to 36 (MASTENPDPETGKSEPIPASATTPPPSAASFLDCRK) the chain is on the cytoplasmic side. Residues 37–57 (IDVIIRVLLFSATLTALIVMV) traverse the membrane as a helical segment. Residues 58–85 (TSDQTEKTQLPGVSSPAPVSAEFNDSPA) lie on the Extracellular side of the membrane. A helical transmembrane segment spans residues 86–106 (FIFFVVALVVTSFYALMSTLV). Over 107–129 (SISLLLKPEFTARVSVYLASLDM) the chain is Cytoplasmic. The helical transmembrane segment at 130–150 (VMLGILASATGTAGGVAYIAL) threads the bilayer. Over 151–171 (KGNKEVGWNKICNVYDKFCRY) the chain is Extracellular. Residues 172 to 192 (IATSLALSLFATLLLLVLSIC) form a helical membrane-spanning segment. Over 193–200 (SALSKRTP) the chain is Cytoplasmic.

The protein belongs to the Casparian strip membrane proteins (CASP) family. Homodimer and heterodimers.

It localises to the cell membrane. The chain is CASP-like protein 1D2 from Arabidopsis lyrata subsp. lyrata (Lyre-leaved rock-cress).